We begin with the raw amino-acid sequence, 500 residues long: MSYFPWLTLIVVFPIFAGCFIFFLPHKGNKVVRWYTMGICLLELLIMTYVFCYHFKLDDPLIQMEDDFQWINVFDFHWRLGIDGLSIGPILLTGFITTLATLAAWPVTRDSRLFHFLMLAMYSGQIGLFSSRDLLLFFMMWELELIPVYLLLSMWGGKKRLYSATKFILYTAGGSIFLLIGVLGMGLYGSNGPTLNFETVANQSYPLGLEILLYFGFLIAFAVKLPIIPLHTWLPDTHGEAHYSTCMLLAGILLKMGAYGLIRINMEFLSHAHSIFSPWLVIVGTIQIIYAALTSLGQRNLKKRIAYSSVSHMGFIIIGIGSLTNTGLNGAILQLLSHGFIGAALFFLGGTSCDRIRLVYLDEMGGISIPMPKIFTMFSSFSMASLALPGMSGFVAELMVFLGIITSQKYLLMTKIIITLVMAIGIILTPIYLLSMLRQMFYGYKLFNLSNSFFVDSGPRELFVSICIFLPVIAIGIYPDLVISLSVDKVQQILSNYYYR.

The next 14 helical transmembrane spans lie at 4 to 24, 35 to 55, 87 to 107, 113 to 130, 134 to 154, 167 to 187, 208 to 228, 242 to 262, 274 to 294, 305 to 325, 330 to 350, 386 to 406, 416 to 436, and 463 to 483; these read FPWL…IFFL, YTMG…CYHF, IGPI…AWPV, LFHF…GLFS, LLLF…LLSM, FILY…GMGL, GLEI…LPII, HYST…YGLI, SIFS…AALT, IAYS…SLTN, GAIL…FLGG, LALP…GIIT, IIIT…LLSM, and FVSI…DLVI.

It belongs to the complex I subunit 4 family.

It is found in the plastid. The protein localises to the chloroplast thylakoid membrane. The enzyme catalyses a plastoquinone + NADH + (n+1) H(+)(in) = a plastoquinol + NAD(+) + n H(+)(out). The catalysed reaction is a plastoquinone + NADPH + (n+1) H(+)(in) = a plastoquinol + NADP(+) + n H(+)(out). The polypeptide is NAD(P)H-quinone oxidoreductase chain 4, chloroplastic (Lemna minor (Common duckweed)).